The sequence spans 278 residues: MPIAPSTYYDHINREPSRRELRDGELKEHISRVHAANYGVYGARKVWLTLNREGIEVARCTVERLMTKLGLSGTTRGKARRTTIADPATARPADLVQRRFGPPAPNRLWVADLTYVSTWAGFAYVAFVTDAYARRILGWRVASTMATSMVLDAIEQAIWTRQQEGVLDLKDVIHHTDRGSQYTSIRFSERLAEAGIQPSVGAVGSSYDNALAETINGLYKTELIKPGKPWRSIEDVELATARWVDWFNHRRLYQYCGDVPPVELEAAYYAQRQRPAAG.

The 168-residue stretch at Gly101–Tyr268 folds into the Integrase catalytic domain.

In terms of biological role, involved in the transposition of the insertion sequence. This chain is Putative transposase for insertion sequence element IS986/IS6110, found in Mycobacterium bovis (strain ATCC BAA-935 / AF2122/97).